The chain runs to 714 residues: Elongation factor G-like protein (714 aa).

In terms of domain architecture, tr-type G spans 21-289 (GGVRNVVLVG…VATRGFPSPM (269 aa)). The segment at 30–37 (GPSGGGKT) is G1. Position 30–37 (30–37 (GPSGGGKT)) interacts with GTP. The segment at 73-77 (QRSVG) is G2. Residues 94–97 (DTPG) form a G3 region. GTP-binding positions include 94 to 98 (DTPGY) and 148 to 151 (TKLD). Residues 148 to 151 (TKLD) are G4. The G5 stretch occupies residues 267–269 (CSS).

It belongs to the TRAFAC class translation factor GTPase superfamily. Classic translation factor GTPase family. EF-G/EF-2 subfamily.

This is Elongation factor G-like protein from Mycobacterium tuberculosis (strain ATCC 25618 / H37Rv).